The chain runs to 766 residues: Ribonuclease Z, mitochondrial (766 aa).

A mitochondrion-targeting transit peptide spans 1–25 (MYLVKSAGSPIYRTLRTLTTSNLMA).

This sequence belongs to the RNase Z family. As to quaternary structure, homodimer. It depends on Zn(2+) as a cofactor.

Its subcellular location is the nucleus. The protein resides in the mitochondrion. It catalyses the reaction Endonucleolytic cleavage of RNA, removing extra 3' nucleotides from tRNA precursor, generating 3' termini of tRNAs. A 3'-hydroxy group is left at the tRNA terminus and a 5'-phosphoryl group is left at the trailer molecule.. In terms of biological role, zinc phosphodiesterase, which displays some tRNA 3'-processing endonuclease activity of nuclear and mitochondrial pre-tRNA. Probably involved in tRNA maturation, by removing a 3'-trailer from precursor tRNA. May participate in tRNA processing in the developing embryo. The polypeptide is Ribonuclease Z, mitochondrial (Drosophila melanogaster (Fruit fly)).